The sequence spans 120 residues: Spermidine export protein MdtJ (120 aa).

Transmembrane regions (helical) follow at residues 1–21 (MFYWILLALAIVAEITGTLSM), 31–51 (AGYILMLVMITLSYIFLSFAV), 54–74 (IALGVAYALWEGIGILFITVF), and 81–101 (EVLSTMKIVGLLTLIVGIVLI).

The protein belongs to the drug/metabolite transporter (DMT) superfamily. Small multidrug resistance (SMR) (TC 2.A.7.1) family. MdtJ subfamily. Forms a complex with MdtI.

It localises to the cell inner membrane. Its function is as follows. Catalyzes the excretion of spermidine. This chain is Spermidine export protein MdtJ, found in Salmonella arizonae (strain ATCC BAA-731 / CDC346-86 / RSK2980).